A 741-amino-acid polypeptide reads, in one-letter code: Zinc finger and BTB domain-containing protein 20 (741 aa).

Over residues 1–17 (MLERKKPKTAENQKASE) the composition is skewed to basic and acidic residues. A disordered region spans residues 1-32 (MLERKKPKTAENQKASEENEITQPGGSSAKPG). One can recognise a BTB domain in the interval 104 to 167 (CDVTVRIHGS…MYSGVLRVSQ (64 aa)). A disordered region spans residues 203–235 (GIQDSGQDTPRGTPESGTSGQSSDTESGYLQSH). Positions 206–235 (DSGQDTPRGTPESGTSGQSSDTESGYLQSH) are enriched in polar residues. The residue at position 211 (threonine 211) is a Phosphothreonine. A Glycyl lysine isopeptide (Lys-Gly) (interchain with G-Cter in SUMO1); alternate cross-link involves residue lysine 330. A Glycyl lysine isopeptide (Lys-Gly) (interchain with G-Cter in SUMO2); alternate cross-link involves residue lysine 330. A disordered region spans residues 350–440 (RNESEECTED…SSPERSNEVE (91 aa)). Serine 353 carries the post-translational modification Phosphoserine. Residues 354–367 (EECTEDTDQAEGTE) show a composition bias toward acidic residues. Threonine 357 carries the post-translational modification Phosphothreonine. Lysine 371 is covalently cross-linked (Glycyl lysine isopeptide (Lys-Gly) (interchain with G-Cter in SUMO2)). The span at 404–423 (AEPTQPEQAAEAPAEGGPQT) shows a compositional bias: low complexity. Positions 424-434 (NQLETGASSPE) are enriched in polar residues. C2H2-type zinc fingers lie at residues 578–600 (YECT…MFVH), 606–628 (HQCS…MVTH), 634–656 (YQCS…MRLH), and 662–684 (YECY…VALH). Threonine 690 and threonine 695 each carry phosphothreonine. A C2H2-type 5 zinc finger spans residues 715–737 (YVCSVCPAKFDQIEQFNDHMRMH). A Glycyl lysine isopeptide (Lys-Gly) (interchain with G-Cter in SUMO2) cross-link involves residue lysine 723.

As to quaternary structure, can homodimerize. Binds to DNA. Sumoylated with SUMO1. Expressed in spleen, lymph node, thymus, peripheral blood leukocytes, and fetal liver.

The protein resides in the nucleus. Functionally, may be a transcription factor that may be involved in hematopoiesis, oncogenesis, and immune responses. Plays a role in postnatal myogenesis, may be involved in the regulation of satellite cells self-renewal. In Homo sapiens (Human), this protein is Zinc finger and BTB domain-containing protein 20 (ZBTB20).